A 109-amino-acid chain; its full sequence is Large ribosomal subunit protein uL22 (109 aa).

This sequence belongs to the universal ribosomal protein uL22 family. As to quaternary structure, part of the 50S ribosomal subunit.

In terms of biological role, this protein binds specifically to 23S rRNA; its binding is stimulated by other ribosomal proteins, e.g. L4, L17, and L20. It is important during the early stages of 50S assembly. It makes multiple contacts with different domains of the 23S rRNA in the assembled 50S subunit and ribosome. Functionally, the globular domain of the protein is located near the polypeptide exit tunnel on the outside of the subunit, while an extended beta-hairpin is found that lines the wall of the exit tunnel in the center of the 70S ribosome. This is Large ribosomal subunit protein uL22 from Ralstonia pickettii (strain 12J).